Here is a 351-residue protein sequence, read N- to C-terminus: Pinopsin (351 aa).

Topologically, residues 1–30 (MSSNSSQAPPNGTPGPFDGPQWPYQAPQST) are extracellular. An N-linked (GlcNAc...) asparagine glycan is attached at Asn4. The chain crosses the membrane as a helical span at residues 31 to 55 (YVGVAVLMGTVVACASVVNGLVIVV). Residues 56–67 (SICYKKLRSPLN) are Cytoplasmic-facing. A helical membrane pass occupies residues 68-92 (YILVNLAVADLLVTLCGSSVSLSNN). Residues 93–107 (INGFFVFGRRMCELE) are Extracellular-facing. Cys104 and Cys181 are disulfide-bonded. Residues 108–127 (GFMVSLTGIVGLWSLAILAL) form a helical membrane-spanning segment. Residues 128–146 (ERYVVVCKPLGDFQFQRRH) are Cytoplasmic-facing. Residues 147-170 (AVSGCAFTWGWALLWSAPPLLGWS) form a helical membrane-spanning segment. Over 171–194 (SYVPEGLRTSCGPNWYTGGSNNNS) the chain is Extracellular. Asn192 carries N-linked (GlcNAc...) asparagine glycosylation. The helical transmembrane segment at 195–222 (YILSLFVTCFVLPLSLILFSYTNLLLTL) threads the bilayer. Over 223-244 (RAAAAQQKEADTTQRAEREVTR) the chain is Cytoplasmic. The helical transmembrane segment at 245 to 268 (MVIVMVMAFLLCWLPYSTFALVVA) threads the bilayer. Topologically, residues 269–276 (THKGIIIQ) are extracellular. The helical transmembrane segment at 277-301 (PVLASLPSYFSKTATVYNPIIYVFM) threads the bilayer. An N6-(retinylidene)lysine modification is found at Lys288. The Cytoplasmic segment spans residues 302 to 351 (NKQFQSCLLEMLCCGYQPQRTGKASPGTPGPHADVTAAGLRNKVMPAHPV). Residues Cys314 and Cys315 are each lipidated (S-palmitoyl cysteine).

It belongs to the G-protein coupled receptor 1 family. Opsin subfamily. In terms of processing, phosphorylated on some or all of the serine and threonine residues present in the C-terminal region. As to expression, pineal gland.

The protein resides in the membrane. Its function is as follows. Produces a slow and prolonged phototransduction response consistent with the non-visual function of pineal photoreception. The sequence is that of Pinopsin from Gallus gallus (Chicken).